A 213-amino-acid chain; its full sequence is DNA-directed RNA polymerase subunit alpha (213 aa).

Belongs to the RNA polymerase alpha chain family. In terms of assembly, in plastids the minimal PEP RNA polymerase catalytic core is composed of four subunits: alpha, beta, beta', and beta''. When a (nuclear-encoded) sigma factor is associated with the core the holoenzyme is formed, which can initiate transcription.

The protein localises to the plastid. It is found in the chloroplast. The catalysed reaction is RNA(n) + a ribonucleoside 5'-triphosphate = RNA(n+1) + diphosphate. Its function is as follows. DNA-dependent RNA polymerase catalyzes the transcription of DNA into RNA using the four ribonucleoside triphosphates as substrates. In Euglena stellata, this protein is DNA-directed RNA polymerase subunit alpha (rpoA).